The sequence spans 184 residues: Ribosome-recycling factor (184 aa).

This sequence belongs to the RRF family.

The protein localises to the cytoplasm. Responsible for the release of ribosomes from messenger RNA at the termination of protein biosynthesis. May increase the efficiency of translation by recycling ribosomes from one round of translation to another. In Borrelia hermsii (strain HS1 / DAH), this protein is Ribosome-recycling factor.